A 332-amino-acid polypeptide reads, in one-letter code: tRNA-dihydrouridine synthase B (332 aa).

Residues 16–18 and Gln70 each bind FMN; that span reads PMA. Cys100 acts as the Proton donor in catalysis. Residues Lys139, 200 to 202, and 224 to 225 contribute to the FMN site; these read NGD and GR.

Belongs to the Dus family. DusB subfamily. It depends on FMN as a cofactor.

The catalysed reaction is a 5,6-dihydrouridine in tRNA + NAD(+) = a uridine in tRNA + NADH + H(+). The enzyme catalyses a 5,6-dihydrouridine in tRNA + NADP(+) = a uridine in tRNA + NADPH + H(+). In terms of biological role, catalyzes the synthesis of 5,6-dihydrouridine (D), a modified base found in the D-loop of most tRNAs, via the reduction of the C5-C6 double bond in target uridines. The polypeptide is tRNA-dihydrouridine synthase B (Pasteurella multocida (strain Pm70)).